Here is a 348-residue protein sequence, read N- to C-terminus: Dihydroorotase (348 aa).

Residues histidine 14 and histidine 16 each coordinate Zn(2+). Residues 16 to 18 (HLR) and asparagine 42 contribute to the substrate site. 3 residues coordinate Zn(2+): lysine 100, histidine 137, and histidine 175. At lysine 100 the chain carries N6-carboxylysine. Residue histidine 137 coordinates substrate. A substrate-binding site is contributed by leucine 220. Aspartate 248 contacts Zn(2+). The active site involves aspartate 248. The substrate site is built by histidine 252 and alanine 264.

Belongs to the metallo-dependent hydrolases superfamily. DHOase family. Class II DHOase subfamily. In terms of assembly, homodimer. The cofactor is Zn(2+).

It carries out the reaction (S)-dihydroorotate + H2O = N-carbamoyl-L-aspartate + H(+). The protein operates within pyrimidine metabolism; UMP biosynthesis via de novo pathway; (S)-dihydroorotate from bicarbonate: step 3/3. Catalyzes the reversible cyclization of carbamoyl aspartate to dihydroorotate. This Pseudomonas putida (strain W619) protein is Dihydroorotase.